Reading from the N-terminus, the 141-residue chain is Large ribosomal subunit protein uL11c (141 aa).

It belongs to the universal ribosomal protein uL11 family. In terms of assembly, part of the ribosomal stalk of the 50S ribosomal subunit. Interacts with L10 and the large rRNA to form the base of the stalk. L10 forms an elongated spine to which L12 dimers bind in a sequential fashion forming a multimeric L10(L12)X complex.

The protein localises to the plastid. The protein resides in the chloroplast. Functionally, forms part of the ribosomal stalk which helps the ribosome interact with GTP-bound translation factors. The sequence is that of Large ribosomal subunit protein uL11c from Trieres chinensis (Marine centric diatom).